The sequence spans 1745 residues: Intraflagellar transport protein 172 homolog (1745 aa).

WD repeat units follow at residues 14 to 53 (DGAAKVTCMAWAPNNAKFAVCTIDRVVILYDEQGEKRDRF), 64 to 103 (KKTYVVKSMAFSPDSTKIAVAQTDNIIFVYKIGEEWGDKK), 110 to 148 (IQTSAVTSLVWPSEHAIIFGLAEGKVRQANTKTSKSSTI), 150 to 190 (GTDS…GESQ), 195 to 233 (THACPPYALAWGTNSIIVAGCDKKIVAYGKEGNVIQTFD), 238 to 278 (RAEK…WDES), 284 to 323 (PNLYTITALSWKKDGSRLSVGTLCGGVEMFDCCLRRSIYK), 483 to 521 (SHDSKIDWLELNETGRKLLFRDKKLRLHLYDIESSVKST), 522 to 559 (MLSFCPYVQWVPGSDVVVAQNRGNLCVWYTIDSPERVT), and 680 to 725 (DHYQ…DECI). TPR repeat units lie at residues 691–725 (LDKNFKLAEMYYMEQNAVDEVMEMYQELHMWDECI), 750–784 (TNQNEKAAEVKENEGDFTGAVNLYLKAGLPAKAAW), 809–842 (GEFYERAGDLFERTRNNQRALECYRKGNAFKKAV), 854–887 (VKLEEVWGDYLVQQKQMDAAINHYIEAGRSIKAI), 912–945 (AKYYLKIAQYYASVQEFEVAERLFVKGDHIKDAI), 947–971 (MYTQAGRWEQAHKLAVKCMTQEDVS), 972–1004 (VLYVSRAQELEKEGKYKEAERLFTTVDEPDLAI), 1042–1075 (ESRFQEAEYHYLEGQDWKAAVNMYRVNDMWEEAY), 1272–1305 (VEGMIEQAQEWEQTGEYSRAVDCYLKVKDSSNLD), 1328–1361 (VDVSQIVGPRLIQLRKYNEAAELYLNLDLIKNAI), and 1407–1441 (GVDVVAALDMYAERGQWEKCIDTASKQNFKVLHKY).

This sequence belongs to the IFT172 family.

The protein resides in the cell projection. It is found in the cilium. Functionally, required for the maintenance and formation of cilia. This is Intraflagellar transport protein 172 homolog (ift172) from Danio rerio (Zebrafish).